Here is an 872-residue protein sequence, read N- to C-terminus: Leucine--tRNA ligase (872 aa).

The short motif at 42 to 52 (PYPSGSLHMGH) is the 'HIGH' region element. The 'KMSKS' region signature appears at 634–638 (TMSKS). K637 serves as a coordination point for ATP.

The protein belongs to the class-I aminoacyl-tRNA synthetase family.

It is found in the cytoplasm. It carries out the reaction tRNA(Leu) + L-leucine + ATP = L-leucyl-tRNA(Leu) + AMP + diphosphate. The protein is Leucine--tRNA ligase of Trichormus variabilis (strain ATCC 29413 / PCC 7937) (Anabaena variabilis).